Here is a 467-residue protein sequence, read N- to C-terminus: ATP synthase subunit beta (467 aa).

156 to 163 (GGAGVGKT) serves as a coordination point for ATP.

It belongs to the ATPase alpha/beta chains family. F-type ATPases have 2 components, CF(1) - the catalytic core - and CF(0) - the membrane proton channel. CF(1) has five subunits: alpha(3), beta(3), gamma(1), delta(1), epsilon(1). CF(0) has three main subunits: a(1), b(2) and c(9-12). The alpha and beta chains form an alternating ring which encloses part of the gamma chain. CF(1) is attached to CF(0) by a central stalk formed by the gamma and epsilon chains, while a peripheral stalk is formed by the delta and b chains.

The protein localises to the cell inner membrane. It catalyses the reaction ATP + H2O + 4 H(+)(in) = ADP + phosphate + 5 H(+)(out). In terms of biological role, produces ATP from ADP in the presence of a proton gradient across the membrane. The catalytic sites are hosted primarily by the beta subunits. This chain is ATP synthase subunit beta, found in Cupriavidus metallidurans (strain ATCC 43123 / DSM 2839 / NBRC 102507 / CH34) (Ralstonia metallidurans).